The chain runs to 199 residues: Hematopoietic prostaglandin D synthase (199 aa).

Positions 2-79 constitute a GST N-terminal domain; that stretch reads PNYKLLYFNM…YLTKNTDLAG (78 aa). Residues tyrosine 8, arginine 14, tryptophan 39, 49-51, and 63-64 each bind glutathione; these read GKI and QS. In terms of domain architecture, GST C-terminal spans 81 to 199; sequence TALEQCQADA…WILKRPQTKL (119 aa).

Belongs to the GST superfamily. Sigma family. As to quaternary structure, homodimer. The cofactor is glutathione. In terms of tissue distribution, expressed in skin and oviduct.

Its subcellular location is the cytoplasm. The catalysed reaction is prostaglandin H2 = prostaglandin D2. The enzyme catalyses RX + glutathione = an S-substituted glutathione + a halide anion + H(+). It catalyses the reaction 2-glyceryl-prostaglandin H2 = 2-glyceryl-prostaglandin D2. Bifunctional enzyme which catalyzes both the conversion of PGH2 to PGD2, a prostaglandin involved in smooth muscle contraction/relaxation and a potent inhibitor of platelet aggregation, and the conjugation of glutathione with a wide range of aryl halides and organic isothiocyanates. Also exhibits low glutathione-peroxidase activity. The chain is Hematopoietic prostaglandin D synthase from Mus musculus (Mouse).